Consider the following 466-residue polypeptide: Oxysterol-binding protein 4 (466 aa).

Residues 1-12 (MEIGTSSTTNNI) show a composition bias toward polar residues. Residues 1-67 (MEIGTSSTTN…STSPPSPPIE (67 aa)) form a disordered region. Residues 24-45 (NNNNHNNNSSNNSSNNNSISSS) show a composition bias toward low complexity. A compositionally biased stretch (polar residues) spans 46-60 (PTDSSQLMNGEQSTS).

The protein belongs to the OSBP family.

In Dictyostelium discoideum (Social amoeba), this protein is Oxysterol-binding protein 4 (osbD).